A 409-amino-acid polypeptide reads, in one-letter code: Divalent metal cation transporter MntH (409 aa).

The next 11 helical transmembrane spans lie at 19 to 39 (LSLM…GNFA), 46 to 66 (ATFG…AMLV), 98 to 118 (WVQA…GAAI), 122 to 142 (LLFG…TFLI), 155 to 175 (LVIG…LIFS), 196 to 216 (AVFL…IYLH), 241 to 261 (IAMT…AAAF), 290 to 310 (VFGL…TLAG), 320 to 340 (FYIP…IVIL), 348 to 368 (ILVM…VPLL), and 388 to 408 (ILGK…LISL).

This sequence belongs to the NRAMP family.

Its subcellular location is the cell inner membrane. Its function is as follows. H(+)-stimulated, divalent metal cation uptake system. In Yersinia pseudotuberculosis serotype O:1b (strain IP 31758), this protein is Divalent metal cation transporter MntH.